The following is a 134-amino-acid chain: Interferon-induced transmembrane protein 5 (134 aa).

Positions 1–20 (MDTSYPREDPRAPSSRKADA) are enriched in basic and acidic residues. Residues 1 to 31 (MDTSYPREDPRAPSSRKADAAAHTALSMGTP) form a disordered region. The Extracellular segment spans residues 1–39 (MDTSYPREDPRAPSSRKADAAAHTALSMGTPGPTPRDHM). Residues 40 to 60 (LWSVFSTMYLNLCCLGFLALV) form a helical membrane-spanning segment. 3 S-palmitoyl cysteine lipidation sites follow: cysteine 52, cysteine 53, and cysteine 86. The Cytoplasmic portion of the chain corresponds to 61–88 (HSVKARDQKMAGNLEAARQYGSKAKCYN). A helical transmembrane segment spans residues 89–109 (ILAAMWTLVPPLLLLGLVVTG). Over 110–134 (ALHLSKLAKDSAAFFSTKFDEEDYN) the chain is Extracellular.

Belongs to the CD225/Dispanin family. Interacts with FKBP11. Palmitoylated. As to expression, detected in embryonic bone (at protein level). Highly expressed in osteoblasts of adults and embryos. Expressed in primitive hemopoietic cells.

The protein localises to the cell membrane. In terms of biological role, required for normal bone mineralization. This Mus musculus (Mouse) protein is Interferon-induced transmembrane protein 5 (Ifitm5).